The primary structure comprises 694 residues: Prolyl 3-hydroxylase 2 (694 aa).

Positions 1-23 (MAPGSRSWGAVLLLAAMLPAACG) are cleaved as a signal peptide. TPR repeat units follow at residues 35–68 (FDALYASGVEAYYGGDFAGAARCLEQALRSRREL), 136–169 (RVPYSYLQRAYIQLNKLEEAANAAHTFFMANPEH), 196–229 (HMEDYSAGVRHYDKEEYGLAITFLERALEGYYAE), and 292–325 (PLHYDYLQFAYYRVGDYVKALECARSYLLFHPDD). Residues 386 to 418 (KRYGARQDEHSVPSSISSEPEDGPRLSLTKKPT) are a coiled coil. Positions 395-427 (HSVPSSISSEPEDGPRLSLTKKPTPKPDRELKE) are disordered. Residues Asn-446 and Asn-535 are each glycosylated (N-linked (GlcNAc...) asparagine). The Fe2OG dioxygenase domain maps to 543 to 657 (THLVCRTALS…RCAVALWFTL (115 aa)). His-566, Asp-568, and His-638 together coordinate Fe cation. The active site involves Arg-648. Residues 691 to 694 (KDEL) carry the Prevents secretion from ER motif.

It belongs to the leprecan family. Fe cation is required as a cofactor. The cofactor is L-ascorbate.

It is found in the endoplasmic reticulum. It localises to the sarcoplasmic reticulum. The protein localises to the golgi apparatus. The catalysed reaction is L-prolyl-[collagen] + 2-oxoglutarate + O2 = trans-3-hydroxy-L-prolyl-[collagen] + succinate + CO2. Its function is as follows. Prolyl 3-hydroxylase that catalyzes the post-translational formation of 3-hydroxyproline on collagens. Contributes to proline 3-hydroxylation of collagen COL4A1 and COL1A1 in tendons, the eye sclera and in the eye lens capsule. Has high activity with the type IV collagen COL4A1, and lower activity with COL1A1. Catalyzes hydroxylation of the first Pro in Gly-Pro-Hyp sequences where Hyp is 4-hydroxyproline. Has no activity on substrates that lack 4-hydroxyproline in the third position. The protein is Prolyl 3-hydroxylase 2 of Gallus gallus (Chicken).